A 270-amino-acid chain; its full sequence is Thiazole synthase (270 aa).

Lys111 acts as the Schiff-base intermediate with DXP in catalysis. Residues Gly172, Ala198–Gly199, and Asn220–Ser221 each bind 1-deoxy-D-xylulose 5-phosphate. The tract at residues Ala249–Asp270 is disordered. The span at Ala256–Asp270 shows a compositional bias: polar residues.

The protein belongs to the ThiG family. Homotetramer. Forms heterodimers with either ThiH or ThiS.

It is found in the cytoplasm. The catalysed reaction is [ThiS sulfur-carrier protein]-C-terminal-Gly-aminoethanethioate + 2-iminoacetate + 1-deoxy-D-xylulose 5-phosphate = [ThiS sulfur-carrier protein]-C-terminal Gly-Gly + 2-[(2R,5Z)-2-carboxy-4-methylthiazol-5(2H)-ylidene]ethyl phosphate + 2 H2O + H(+). The protein operates within cofactor biosynthesis; thiamine diphosphate biosynthesis. Functionally, catalyzes the rearrangement of 1-deoxy-D-xylulose 5-phosphate (DXP) to produce the thiazole phosphate moiety of thiamine. Sulfur is provided by the thiocarboxylate moiety of the carrier protein ThiS. In vitro, sulfur can be provided by H(2)S. In Synechococcus sp. (strain WH7803), this protein is Thiazole synthase.